Reading from the N-terminus, the 432-residue chain is Adenylosuccinate synthetase (432 aa).

GTP-binding positions include 13-19 (GDEGKGK) and 41-43 (GHT). D14 (proton acceptor) is an active-site residue. Mg(2+)-binding residues include D14 and G41. IMP contacts are provided by residues 14–17 (DEGK), 39–42 (NAGH), T130, R144, Q225, T240, and R304. The Proton donor role is filled by H42. Position 300–306 (300–306 (AVTGRPR)) interacts with substrate. Residues R306, 332 to 334 (KLD), and 415 to 417 (STG) contribute to the GTP site.

Belongs to the adenylosuccinate synthetase family. As to quaternary structure, homodimer. Mg(2+) serves as cofactor.

It is found in the cytoplasm. It carries out the reaction IMP + L-aspartate + GTP = N(6)-(1,2-dicarboxyethyl)-AMP + GDP + phosphate + 2 H(+). It participates in purine metabolism; AMP biosynthesis via de novo pathway; AMP from IMP: step 1/2. Its function is as follows. Plays an important role in the de novo pathway of purine nucleotide biosynthesis. Catalyzes the first committed step in the biosynthesis of AMP from IMP. In Haemophilus influenzae (strain ATCC 51907 / DSM 11121 / KW20 / Rd), this protein is Adenylosuccinate synthetase.